A 332-amino-acid chain; its full sequence is Nucleoid-associated protein VIBHAR_03026 (332 aa).

Belongs to the YejK family.

The protein resides in the cytoplasm. It is found in the nucleoid. The protein is Nucleoid-associated protein VIBHAR_03026 of Vibrio campbellii (strain ATCC BAA-1116).